We begin with the raw amino-acid sequence, 137 residues long: Probable leaf thionin (137 aa).

A signal peptide spans 1-28; sequence MATNKSIKSVVICVLILGLVLEQVQVEG. 4 disulfide bridges follow: C31/C68, C32/C60, C40/C58, and C44/C54. Residues 75–137 constitute a propeptide, acidic domain; the sequence is LNLLPESGEP…DGDVIQSVEA (63 aa).

Belongs to the plant thionin (TC 1.C.44) family. 4 C-C subfamily.

The protein resides in the secreted. Its function is as follows. Thionins are small plant proteins which are toxic to animal cells. They seem to exert their toxic effect at the level of the cell membrane. Their precise function is not known. This chain is Probable leaf thionin, found in Hordeum vulgare (Barley).